The primary structure comprises 892 residues: Alanine--tRNA ligase (892 aa).

Zn(2+)-binding residues include His577, His581, Cys680, and His684.

It belongs to the class-II aminoacyl-tRNA synthetase family. Requires Zn(2+) as cofactor.

Its subcellular location is the cytoplasm. The catalysed reaction is tRNA(Ala) + L-alanine + ATP = L-alanyl-tRNA(Ala) + AMP + diphosphate. Its function is as follows. Catalyzes the attachment of alanine to tRNA(Ala) in a two-step reaction: alanine is first activated by ATP to form Ala-AMP and then transferred to the acceptor end of tRNA(Ala). Also edits incorrectly charged Ser-tRNA(Ala) and Gly-tRNA(Ala) via its editing domain. This Paenarthrobacter aurescens (strain TC1) protein is Alanine--tRNA ligase.